The chain runs to 691 residues: Elongation factor G (691 aa).

The 276-residue stretch at 8–283 folds into the tr-type G domain; the sequence is EDYRNFGIMA…AVVDYLPSPV (276 aa). Residues 17–24, 81–85, and 135–138 contribute to the GTP site; these read AHIDAGKT, DTPGH, and NKMD.

This sequence belongs to the TRAFAC class translation factor GTPase superfamily. Classic translation factor GTPase family. EF-G/EF-2 subfamily.

The protein resides in the cytoplasm. In terms of biological role, catalyzes the GTP-dependent ribosomal translocation step during translation elongation. During this step, the ribosome changes from the pre-translocational (PRE) to the post-translocational (POST) state as the newly formed A-site-bound peptidyl-tRNA and P-site-bound deacylated tRNA move to the P and E sites, respectively. Catalyzes the coordinated movement of the two tRNA molecules, the mRNA and conformational changes in the ribosome. The polypeptide is Elongation factor G (Methylorubrum populi (strain ATCC BAA-705 / NCIMB 13946 / BJ001) (Methylobacterium populi)).